Here is a 75-residue protein sequence, read N- to C-terminus: Small ribosomal subunit protein bS18 (75 aa).

The protein belongs to the bacterial ribosomal protein bS18 family. Part of the 30S ribosomal subunit. Forms a tight heterodimer with protein bS6.

Binds as a heterodimer with protein bS6 to the central domain of the 16S rRNA, where it helps stabilize the platform of the 30S subunit. The sequence is that of Small ribosomal subunit protein bS18 from Alteromonas mediterranea (strain DSM 17117 / CIP 110805 / LMG 28347 / Deep ecotype).